The following is a 495-amino-acid chain: Putative aldehyde dehydrogenase DhaS (495 aa).

244–249 lines the NAD(+) pocket; that stretch reads GSTEIG. Active-site residues include glutamate 266 and cysteine 300.

It belongs to the aldehyde dehydrogenase family.

The enzyme catalyses an aldehyde + NAD(+) + H2O = a carboxylate + NADH + 2 H(+). The polypeptide is Putative aldehyde dehydrogenase DhaS (dhaS) (Bacillus subtilis (strain 168)).